The primary structure comprises 214 residues: Pyridoxine/pyridoxamine 5'-phosphate oxidase (214 aa).

Substrate-binding positions include 8–11 (RLSY) and Arg66. Residues 61–66 (RTVLLR), 76–77 (FT), Lys83, and Gln105 contribute to the FMN site. Residues Tyr123, Arg127, and Ser131 each coordinate substrate. The tract at residues 126–146 (SRPRESQLAAHASDPQSAPVS) is disordered. Residues 141-142 (QS) and Trp187 each bind FMN. 193 to 195 (RMH) contributes to the substrate binding site. Arg197 contacts FMN.

Belongs to the pyridoxamine 5'-phosphate oxidase family. Homodimer. FMN is required as a cofactor.

The enzyme catalyses pyridoxamine 5'-phosphate + O2 + H2O = pyridoxal 5'-phosphate + H2O2 + NH4(+). It carries out the reaction pyridoxine 5'-phosphate + O2 = pyridoxal 5'-phosphate + H2O2. The protein operates within cofactor metabolism; pyridoxal 5'-phosphate salvage; pyridoxal 5'-phosphate from pyridoxamine 5'-phosphate: step 1/1. It functions in the pathway cofactor metabolism; pyridoxal 5'-phosphate salvage; pyridoxal 5'-phosphate from pyridoxine 5'-phosphate: step 1/1. Functionally, catalyzes the oxidation of either pyridoxine 5'-phosphate (PNP) or pyridoxamine 5'-phosphate (PMP) into pyridoxal 5'-phosphate (PLP). This is Pyridoxine/pyridoxamine 5'-phosphate oxidase from Deinococcus deserti (strain DSM 17065 / CIP 109153 / LMG 22923 / VCD115).